A 155-amino-acid polypeptide reads, in one-letter code: SsrA-binding protein (155 aa).

This sequence belongs to the SmpB family.

It localises to the cytoplasm. Required for rescue of stalled ribosomes mediated by trans-translation. Binds to transfer-messenger RNA (tmRNA), required for stable association of tmRNA with ribosomes. tmRNA and SmpB together mimic tRNA shape, replacing the anticodon stem-loop with SmpB. tmRNA is encoded by the ssrA gene; the 2 termini fold to resemble tRNA(Ala) and it encodes a 'tag peptide', a short internal open reading frame. During trans-translation Ala-aminoacylated tmRNA acts like a tRNA, entering the A-site of stalled ribosomes, displacing the stalled mRNA. The ribosome then switches to translate the ORF on the tmRNA; the nascent peptide is terminated with the 'tag peptide' encoded by the tmRNA and targeted for degradation. The ribosome is freed to recommence translation, which seems to be the essential function of trans-translation. This is SsrA-binding protein from Bacillus cereus (strain B4264).